Reading from the N-terminus, the 354-residue chain is MSKVKSITRESWILSTFPEWGSWLNEEIEQEQVAPGTFAMWWLGCTGIWLKSEGGTNVCVDFWCGTGKQSHGNPLMKAGHQMQRMAGVKKLQPNLRTTPFVLDPFAIRQIDAVLATHDHNDHIDVNVAAAVMQNCADDVPFIGPKTCVDLWIGWGVPKERCIVVKPGDVVKVKDIEIHALDAFDRTALITLPAEQKAAGVLPDGMDERAVNYLFKTPGGTLYHSGDSHYSNYYAKHGNEHQIDVALGSYGENPRGITDKMTSADILRMAEALNTKVVIPFHHDIWSNFQADPQEIRVLWEMKKDRLKYGFKPFIWQVGGKFTWPLDKDNFEYHYPRGFDDCFTIEPDLPFKSFL.

It belongs to the UlaG family. Requires a divalent metal cation as cofactor.

The protein resides in the cytoplasm. The catalysed reaction is L-ascorbate 6-phosphate + H2O = 3-dehydro-L-gulonate 6-phosphate. It participates in cofactor degradation; L-ascorbate degradation; D-xylulose 5-phosphate from L-ascorbate: step 1/4. In terms of biological role, probably catalyzes the hydrolysis of L-ascorbate-6-P into 3-keto-L-gulonate-6-P. Is essential for L-ascorbate utilization under anaerobic conditions. This chain is Probable L-ascorbate-6-phosphate lactonase UlaG, found in Escherichia fergusonii (strain ATCC 35469 / DSM 13698 / CCUG 18766 / IAM 14443 / JCM 21226 / LMG 7866 / NBRC 102419 / NCTC 12128 / CDC 0568-73).